We begin with the raw amino-acid sequence, 482 residues long: GDP-D-glucose phosphorylase 1 (482 aa).

Residues 1–21 (MEPFPRILDDRLPRNMRRPRP) form a disordered region. The Tele-GMP-histidine intermediate role is filled by H255. The disordered stretch occupies residues 461 to 482 (MPRSPSIRHRSSTRAQSDEGSK).

It belongs to the GDPGP1 family. As to expression, expressed throughout the neuronal system, in the spermatheca and anterior hypodermal cells.

The protein localises to the cytoplasm. The enzyme catalyses GDP-alpha-D-glucose + phosphate = alpha-D-glucose 1-phosphate + GDP + H(+). Specific and highly efficient GDP-D-glucose phosphorylase regulating the levels of GDP-D-glucose in cells. The chain is GDP-D-glucose phosphorylase 1 from Caenorhabditis elegans.